We begin with the raw amino-acid sequence, 362 residues long: Peptide chain release factor 1 (362 aa).

Position 236 is an N5-methylglutamine (glutamine 236).

This sequence belongs to the prokaryotic/mitochondrial release factor family. In terms of processing, methylated by PrmC. Methylation increases the termination efficiency of RF1.

The protein resides in the cytoplasm. In terms of biological role, peptide chain release factor 1 directs the termination of translation in response to the peptide chain termination codons UAG and UAA. The sequence is that of Peptide chain release factor 1 from Lactobacillus gasseri (strain ATCC 33323 / DSM 20243 / BCRC 14619 / CIP 102991 / JCM 1131 / KCTC 3163 / NCIMB 11718 / NCTC 13722 / AM63).